The primary structure comprises 169 residues: Ribosome maturation factor RimM (169 aa).

The PRC barrel domain occupies Glu-97 to Tyr-169.

It belongs to the RimM family. In terms of assembly, binds ribosomal protein uS19.

The protein resides in the cytoplasm. Its function is as follows. An accessory protein needed during the final step in the assembly of 30S ribosomal subunit, possibly for assembly of the head region. Essential for efficient processing of 16S rRNA. May be needed both before and after RbfA during the maturation of 16S rRNA. It has affinity for free ribosomal 30S subunits but not for 70S ribosomes. This chain is Ribosome maturation factor RimM, found in Neisseria meningitidis serogroup C / serotype 2a (strain ATCC 700532 / DSM 15464 / FAM18).